We begin with the raw amino-acid sequence, 504 residues long: Amidophosphoribosyltransferase (504 aa).

Cys-2 (nucleophile) is an active-site residue. In terms of domain architecture, Glutamine amidotransferase type-2 spans 2–235 (CGIVGIVSQS…PGEAIYVTFE (234 aa)). Mg(2+)-binding residues include Thr-305, Asp-367, and Asp-368.

The protein in the C-terminal section; belongs to the purine/pyrimidine phosphoribosyltransferase family. It depends on Mg(2+) as a cofactor.

It catalyses the reaction 5-phospho-beta-D-ribosylamine + L-glutamate + diphosphate = 5-phospho-alpha-D-ribose 1-diphosphate + L-glutamine + H2O. The protein operates within purine metabolism; IMP biosynthesis via de novo pathway; N(1)-(5-phospho-D-ribosyl)glycinamide from 5-phospho-alpha-D-ribose 1-diphosphate: step 1/2. Its function is as follows. Catalyzes the formation of phosphoribosylamine from phosphoribosylpyrophosphate (PRPP) and glutamine. In Pasteurella multocida (strain Pm70), this protein is Amidophosphoribosyltransferase.